The chain runs to 265 residues: Protein HesA, vegetative (265 aa).

The protein belongs to the HesA/MoeB/ThiF family.

This Trichormus variabilis (strain ATCC 29413 / PCC 7937) (Anabaena variabilis) protein is Protein HesA, vegetative (hesA2).